The sequence spans 268 residues: MSSMKIAIAGASGRMGRMLIEAVLAAPDATLVGALDRTGSPQLGQDAGAFLGKQTGVALTDDIERVCAEADYLIDFTLPEGTLVHLDAALRHDVKLVIGTTGFSEPQKAQLRAAGEKIALVFSANMSVGVNVTMKLLEFAAKQFAQGYDIEIIEAHHRHKVDAPSGTALMMGETIAAATGRSLDDCAVYGRHGVTGERDPSTIGFSAIRGGDIVGDHTVLFAGIGERIEITHKSASRVSYAQGALRAARFLAGRDAGFFDMQDVLGLR.

NAD(+)-binding positions include 10–15 (GASGRM) and D36. R37 serves as a coordination point for NADP(+). NAD(+) contacts are provided by residues 99–101 (GTT) and 123–126 (SANM). H156 acts as the Proton donor/acceptor in catalysis. H157 provides a ligand contact to (S)-2,3,4,5-tetrahydrodipicolinate. The active-site Proton donor is K160. (S)-2,3,4,5-tetrahydrodipicolinate is bound at residue 166-167 (GT).

This sequence belongs to the DapB family.

Its subcellular location is the cytoplasm. The catalysed reaction is (S)-2,3,4,5-tetrahydrodipicolinate + NAD(+) + H2O = (2S,4S)-4-hydroxy-2,3,4,5-tetrahydrodipicolinate + NADH + H(+). It catalyses the reaction (S)-2,3,4,5-tetrahydrodipicolinate + NADP(+) + H2O = (2S,4S)-4-hydroxy-2,3,4,5-tetrahydrodipicolinate + NADPH + H(+). The protein operates within amino-acid biosynthesis; L-lysine biosynthesis via DAP pathway; (S)-tetrahydrodipicolinate from L-aspartate: step 4/4. In terms of biological role, catalyzes the conversion of 4-hydroxy-tetrahydrodipicolinate (HTPA) to tetrahydrodipicolinate. The protein is 4-hydroxy-tetrahydrodipicolinate reductase of Burkholderia thailandensis (strain ATCC 700388 / DSM 13276 / CCUG 48851 / CIP 106301 / E264).